Reading from the N-terminus, the 387-residue chain is Histone deacetylase 2 (387 aa).

A histone deacetylase region spans residues 73–382 (KVSIIYSSSY…IENLSRQGLI (310 aa)). Catalysis depends on His201, which acts as the Proton donor/acceptor. Zn(2+) contacts are provided by Asp238, His240, and Asp318.

Belongs to the histone deacetylase family. HD type 3 subfamily. Zn(2+) serves as cofactor.

The protein resides in the nucleus. It catalyses the reaction N(6)-acetyl-L-lysyl-[histone] + H2O = L-lysyl-[histone] + acetate. Responsible for the deacetylation of lysine residues on the N-terminal part of the core histones (H2A, H2B, H3 and H4). Histone deacetylation gives a tag for epigenetic repression and plays an important role in transcriptional regulation, cell cycle progression and developmental events. Histone deacetylases act via the formation of large multiprotein complexes. The chain is Histone deacetylase 2 (HDA2) from Arabidopsis thaliana (Mouse-ear cress).